Here is a 259-residue protein sequence, read N- to C-terminus: MLDSVASKPELAELLTLTKTEQILRLAQINVELEQLSAQERVKWALENLEGEFAVSSSFGIQAAVMLHLVTQQKPDIPIILTDTGYLFAETYQFIDQLKAQLNLNLKVYRAKESANWQEARYGKLWEQGIEGIEKYNKINKVEPMRRALREQNVGTWFSGLRREQSQSRAGLPILSIQNGVFKFLPVIDWTNKDVHYYLEEHGLSYHPLWEQGYLSVGDTHTSRKWEPGMSEEETRFFGLKRECGLHEDDGSEQDGSGI.

Cysteine 244 functions as the Nucleophile; cysteine thiosulfonate intermediate in the catalytic mechanism.

Belongs to the PAPS reductase family. CysH subfamily.

Its subcellular location is the cytoplasm. The catalysed reaction is [thioredoxin]-disulfide + sulfite + adenosine 3',5'-bisphosphate + 2 H(+) = [thioredoxin]-dithiol + 3'-phosphoadenylyl sulfate. It functions in the pathway sulfur metabolism; hydrogen sulfide biosynthesis; sulfite from sulfate: step 3/3. In terms of biological role, catalyzes the formation of sulfite from phosphoadenosine 5'-phosphosulfate (PAPS) using thioredoxin as an electron donor. In Vibrio campbellii (strain ATCC BAA-1116), this protein is Phosphoadenosine 5'-phosphosulfate reductase.